The chain runs to 233 residues: Homeobox protein EMX1 (233 aa).

Residues 135–194 constitute a DNA-binding region (homeobox); the sequence is PKRIRTAFSPSQLLRLERAFEKNHYVVGAERKQLASSLSLSETQVKVWFQNRRTKYKRQK. Residues 192–233 form a disordered region; the sequence is RQKLEEEGPDSDQKKKGSHHINRWRLATKQPNGEDIDVTSND. A compositionally biased stretch (basic and acidic residues) spans 193–206; that stretch reads QKLEEEGPDSDQKK.

Belongs to the EMX homeobox family.

The protein resides in the nucleus. Functionally, may function in combinations with OTX1/2 to specify cell fates in the developing central nervous system. This Xenopus tropicalis (Western clawed frog) protein is Homeobox protein EMX1 (emx1).